We begin with the raw amino-acid sequence, 393 residues long: Succinate--CoA ligase [ADP-forming] subunit beta (393 aa).

One can recognise an ATP-grasp domain in the interval 9–242 (KELFAKHGVP…RAATDPLEWK (234 aa)). Residues lysine 45, 52 to 54 (GRG), serine 94, and glutamate 99 each bind ATP. Residues asparagine 191 and aspartate 211 each coordinate Mg(2+). Substrate is bound by residues asparagine 262 and 324–326 (GIT).

It belongs to the succinate/malate CoA ligase beta subunit family. As to quaternary structure, heterotetramer of two alpha and two beta subunits. Mg(2+) is required as a cofactor.

The enzyme catalyses succinate + ATP + CoA = succinyl-CoA + ADP + phosphate. The catalysed reaction is GTP + succinate + CoA = succinyl-CoA + GDP + phosphate. It participates in carbohydrate metabolism; tricarboxylic acid cycle; succinate from succinyl-CoA (ligase route): step 1/1. Functionally, succinyl-CoA synthetase functions in the citric acid cycle (TCA), coupling the hydrolysis of succinyl-CoA to the synthesis of either ATP or GTP and thus represents the only step of substrate-level phosphorylation in the TCA. The beta subunit provides nucleotide specificity of the enzyme and binds the substrate succinate, while the binding sites for coenzyme A and phosphate are found in the alpha subunit. The sequence is that of Succinate--CoA ligase [ADP-forming] subunit beta from Mycobacterium leprae (strain Br4923).